Here is an 873-residue protein sequence, read N- to C-terminus: Zinc fingers and homeoboxes protein 1 (873 aa).

Residues leucine 24–asparagine 63 form a disordered region. Position 36 is a phosphothreonine (threonine 36). Residues serine 45, serine 47, and serine 48 each carry the phosphoserine modification. C2H2-type zinc fingers lie at residues tyrosine 70–histidine 93 and tyrosine 102–histidine 125. Lysine 159 participates in a covalent cross-link: Glycyl lysine isopeptide (Lys-Gly) (interchain with G-Cter in SUMO2). Serine 202 is modified (phosphoserine). The segment at serine 202 to threonine 236 is disordered. Over residues asparagine 212 to isoleucine 221 the composition is skewed to basic and acidic residues. Positions glutamate 223–threonine 236 are enriched in low complexity. Residues asparagine 272 to proline 432 are required for dimerization. The interval asparagine 272–phenylalanine 564 is required for interaction with NFYA. The homeobox 1 DNA-binding region spans asparagine 284–glutamate 346. Residues lysine 441, lysine 454, lysine 485, and lysine 629 each participate in a glycyl lysine isopeptide (Lys-Gly) (interchain with G-Cter in SUMO2) cross-link. 2 consecutive DNA-binding regions (homeobox) follow at residues serine 464–glutamine 526 and proline 569–methionine 630. 2 disordered regions span residues lysine 626 to lysine 667 and serine 732 to aspartate 770. Serine 648 is modified (phosphoserine). The homeobox 4 DNA-binding region spans serine 660–tryptophan 722. The required for nuclear localization stretch occupies residues methionine 734 to asparagine 768. Residues leucine 740 to lysine 764 are compositionally biased toward basic residues. Position 774 is a phosphoserine (serine 774). Positions lysine 777–phenylalanine 832 form a DNA-binding region, homeobox 5. The tract at residues isoleucine 829–aspartate 873 is disordered. Over residues leucine 831–threonine 857 the composition is skewed to acidic residues. The interval leucine 831–aspartate 873 is required for repressor activity. Basic residues predominate over residues histidine 863 to aspartate 873.

Belongs to the ZHX family. As to quaternary structure, forms homodimers. Heterodimer (via HD1 domain) with ZHX2 (via HD1 domain). Also forms a heterodimer with ZHX3 which is a prerequisite for repressor activity. Interacts with ATF7IP and NFYA. Interacts (via homeobox domains) with DNMT3B (via PWWP domain). Ubiquitously expressed. Expressed in podocytes.

It is found in the nucleus. Functionally, acts as a transcriptional repressor. Increases DNMT3B-mediated repressive transcriptional activity when DNMT3B is tethered to DNA. May link molecule between DNMT3B and other co-repressor proteins. The chain is Zinc fingers and homeoboxes protein 1 (ZHX1) from Homo sapiens (Human).